The chain runs to 173 residues: Crossover junction endodeoxyribonuclease RuvC (173 aa).

Active-site residues include Asp8, Glu67, and Asp139. 3 residues coordinate Mg(2+): Asp8, Glu67, and Asp139.

The protein belongs to the RuvC family. Homodimer which binds Holliday junction (HJ) DNA. The HJ becomes 2-fold symmetrical on binding to RuvC with unstacked arms; it has a different conformation from HJ DNA in complex with RuvA. In the full resolvosome a probable DNA-RuvA(4)-RuvB(12)-RuvC(2) complex forms which resolves the HJ. The cofactor is Mg(2+).

The protein resides in the cytoplasm. It carries out the reaction Endonucleolytic cleavage at a junction such as a reciprocal single-stranded crossover between two homologous DNA duplexes (Holliday junction).. Functionally, the RuvA-RuvB-RuvC complex processes Holliday junction (HJ) DNA during genetic recombination and DNA repair. Endonuclease that resolves HJ intermediates. Cleaves cruciform DNA by making single-stranded nicks across the HJ at symmetrical positions within the homologous arms, yielding a 5'-phosphate and a 3'-hydroxyl group; requires a central core of homology in the junction. The consensus cleavage sequence is 5'-(A/T)TT(C/G)-3'. Cleavage occurs on the 3'-side of the TT dinucleotide at the point of strand exchange. HJ branch migration catalyzed by RuvA-RuvB allows RuvC to scan DNA until it finds its consensus sequence, where it cleaves and resolves the cruciform DNA. This Baumannia cicadellinicola subsp. Homalodisca coagulata protein is Crossover junction endodeoxyribonuclease RuvC.